We begin with the raw amino-acid sequence, 417 residues long: Hyaluronidase-3 (417 aa).

Positions 1–20 are cleaved as a signal peptide; sequence MTTQLGPALVLGVALCLGCG. Cystine bridges form between Cys42–Cys331, Cys205–Cys220, Cys356–Cys367, Cys361–Cys395, and Cys397–Cys406. An N-linked (GlcNAc...) asparagine glycan is attached at Asn69. Glu129 serves as the catalytic Proton donor. Asn215 carries an N-linked (GlcNAc...) asparagine glycan. Residues 352-407 enclose the EGF-like domain; it reads AAMACSHQRCHGHGRCARRDPGQMEAFLHLWPDGSLGDWKSFSCHCYWGWAGPTCQ.

Belongs to the glycosyl hydrolase 56 family. N-glycosylated. Expressed in sperm. Highly expressed in epidermis of the skin, where it is expressed intracellularily in the deep horny layer (at protein level). Bone marrow, testis and kidney.

It localises to the secreted. The protein resides in the cell membrane. The protein localises to the cytoplasmic vesicle. It is found in the secretory vesicle. Its subcellular location is the acrosome. It localises to the endoplasmic reticulum. The protein resides in the early endosome. It carries out the reaction Random hydrolysis of (1-&gt;4)-linkages between N-acetyl-beta-D-glucosamine and D-glucuronate residues in hyaluronate.. Facilitates sperm penetration into the layer of cumulus cells surrounding the egg by digesting hyaluronic acid. Involved in induction of the acrosome reaction in the sperm. Involved in follicular atresia, the breakdown of immature ovarian follicles that are not selected to ovulate. Induces ovarian granulosa cell apoptosis, possibly via apoptotic signaling pathway involving CASP8 and CASP3 activation, and poly(ADP-ribose) polymerase (PARP) cleavage. Has no hyaluronidase activity in embryonic fibroblasts in vitro. Has no hyaluronidase activity in granulosa cells in vitro. This is Hyaluronidase-3 (HYAL3) from Homo sapiens (Human).